Reading from the N-terminus, the 437-residue chain is Cytochrome b (437 aa).

A helical transmembrane segment spans residues tryptophan 45–leucine 65. Residues histidine 97 and histidine 111 each coordinate heme b. The next 9 helical transmembrane spans lie at glycine 100 to serine 120, tryptophan 129 to leucine 149, phenylalanine 156 to isoleucine 176, phenylalanine 194 to tryptophan 214, phenylalanine 248 to alanine 268, phenylalanine 298 to valine 318, phenylalanine 330 to aspartate 350, methionine 365 to threonine 385, and tryptophan 391 to leucine 411. Residues histidine 198 and histidine 212 each coordinate heme b.

Belongs to the cytochrome b family. As to quaternary structure, the main subunits of complex b-c1 are: cytochrome b, cytochrome c1 and the Rieske protein. Heme b serves as cofactor.

The protein localises to the cell membrane. Functionally, component of the ubiquinol-cytochrome c reductase complex (complex III or cytochrome b-c1 complex), which is a respiratory chain that generates an electrochemical potential coupled to ATP synthesis. This chain is Cytochrome b (petB), found in Rhodobacter capsulatus (Rhodopseudomonas capsulata).